The primary structure comprises 885 residues: MAGVNEIRSTFLDYFRKNGHEVVPSSPLVPRNDPTLMFTNAGMVQFKNVFTGLEHRSYNRATTSQKCVRAGGKHNDLDNVGYTARHHTFFEMLGNFSFGDYFKEDAISFAWNLITREFGLPKDKLLVTVYHTDDDAANFWKKIAGLSDDRIIRIPTSDNFWAMGDTGPCGPCSEIFYDHGDHIWGGPPGSPEEDGDRFIEIWNLVFMQFEQQTPELRIDLPRPSIDTGMGLERIAAVLQGVHDNYDIDLFKALIRASEEATGVKAEGDFRASHRVIADHLRASSFLIADGVLPSNEGRGYVLRRIMRRAMRHAQLLGAKEPLMWRLLPALIREMGQAYPELIRAESLISETLKLEETRFRKTLERGLGLLSDASENLAEGDRLDGETAFKLYDTYGFPLDLTQDALRQRGIAVDTEGFNVAMERQKAEARANWTGSGEAATETIWFGIKDKVGATEFLGYETESAEGVIASLVRDGVEVPSVREGETISVVVNQTPFYGESGGQQGDTGTISGEGFVIAVKDTQKKGEGVFVHIGEVTEGTAKAGDVVELKVDSARRTRIRSNHSATHLLHEALRETLGTHVAQKGSLVAPDRLRFDFSHPKPISAEELEAVENLANEIILQNAPVTTRLMAVDDAIAEGAMALFGEKYGDEVRVVSMGTAKHGSKAGKAYSVELCGGTHVRQTGDIGLVRIISEGGVAAGVRRLEALTGEAARLYLEEQDERVKAIASALKTTSADVLDRVNALIDERKKLERELADARKKLALGGGSSDGGSAVEAVNGVNFLGKIVTGVSPRDLKPLADEGKKQVGSGVVLFIGVGEDGKASAVAAVTEDMVGRFSAVDLVRAASAALGGAGGGGRPDMAQAGGPDGAKAADAIAAVKALIA.

Residues H564, H568, C676, and H680 each contribute to the Zn(2+) site.

This sequence belongs to the class-II aminoacyl-tRNA synthetase family. The cofactor is Zn(2+).

The protein resides in the cytoplasm. The catalysed reaction is tRNA(Ala) + L-alanine + ATP = L-alanyl-tRNA(Ala) + AMP + diphosphate. Its function is as follows. Catalyzes the attachment of alanine to tRNA(Ala) in a two-step reaction: alanine is first activated by ATP to form Ala-AMP and then transferred to the acceptor end of tRNA(Ala). Also edits incorrectly charged Ser-tRNA(Ala) and Gly-tRNA(Ala) via its editing domain. In Brucella abortus (strain 2308), this protein is Alanine--tRNA ligase.